We begin with the raw amino-acid sequence, 240 residues long: Dihydromonapterin reductase (240 aa).

Tyrosine 152 (proton acceptor) is an active-site residue.

It belongs to the short-chain dehydrogenases/reductases (SDR) family. FolM subfamily.

It catalyses the reaction (6S)-5,6,7,8-tetrahydrofolate + NADP(+) = 7,8-dihydrofolate + NADPH + H(+). It carries out the reaction 7,8-dihydromonapterin + NADPH + H(+) = 5,6,7,8-tetrahydromonapterin + NADP(+). Catalyzes the reduction of dihydromonapterin to tetrahydromonapterin. Also has lower activity with dihydrofolate. This chain is Dihydromonapterin reductase (folM), found in Shigella flexneri serotype 5b (strain 8401).